Here is a 198-residue protein sequence, read N- to C-terminus: Nucleoside triphosphate pyrophosphatase (198 aa).

Asp72 acts as the Proton acceptor in catalysis.

This sequence belongs to the Maf family. It depends on a divalent metal cation as a cofactor.

It is found in the cytoplasm. It carries out the reaction a ribonucleoside 5'-triphosphate + H2O = a ribonucleoside 5'-phosphate + diphosphate + H(+). The enzyme catalyses a 2'-deoxyribonucleoside 5'-triphosphate + H2O = a 2'-deoxyribonucleoside 5'-phosphate + diphosphate + H(+). Its function is as follows. Nucleoside triphosphate pyrophosphatase. May have a dual role in cell division arrest and in preventing the incorporation of modified nucleotides into cellular nucleic acids. The chain is Nucleoside triphosphate pyrophosphatase from Corynebacterium aurimucosum (strain ATCC 700975 / DSM 44827 / CIP 107346 / CN-1) (Corynebacterium nigricans).